We begin with the raw amino-acid sequence, 63 residues long: Laccase-C1 (63 aa).

It belongs to the multicopper oxidase family. Monomer. The cofactor is Cu cation. Glycosylated; contains 16% carbohydrates.

The protein resides in the secreted. The enzyme catalyses 4 hydroquinone + O2 = 4 benzosemiquinone + 2 H2O. With respect to regulation, inhibited by sodium azide. Lignin degradation and detoxification of lignin-derived products. Oxidation of a broad range of substrates including mono-, di- and polyphenols, aromatic amines and methoxy-substituted phenols accompanied by reduction of oxygen to water. This Cerrena unicolor (Canker rot fungus) protein is Laccase-C1.